The primary structure comprises 281 residues: Large ribosomal subunit protein uL2 (281 aa).

Positions 210–281 (RTRYAGQRPH…RGRKRGPHTR (72 aa)) are disordered. Residues 254-281 (TVGKKTRSHKARSNKFIVRGRKRGPHTR) are compositionally biased toward basic residues.

Belongs to the universal ribosomal protein uL2 family. As to quaternary structure, part of the 50S ribosomal subunit. Forms a bridge to the 30S subunit in the 70S ribosome.

In terms of biological role, one of the primary rRNA binding proteins. Required for association of the 30S and 50S subunits to form the 70S ribosome, for tRNA binding and peptide bond formation. It has been suggested to have peptidyltransferase activity; this is somewhat controversial. Makes several contacts with the 16S rRNA in the 70S ribosome. In Limosilactobacillus reuteri subsp. reuteri (strain JCM 1112) (Lactobacillus reuteri), this protein is Large ribosomal subunit protein uL2.